Consider the following 485-residue polypeptide: Glutamyl-tRNA(Gln) amidotransferase subunit A (485 aa).

Catalysis depends on charge relay system residues lysine 79 and serine 154. The Acyl-ester intermediate role is filled by serine 178.

Belongs to the amidase family. GatA subfamily. In terms of assembly, heterotrimer of A, B and C subunits.

It carries out the reaction L-glutamyl-tRNA(Gln) + L-glutamine + ATP + H2O = L-glutaminyl-tRNA(Gln) + L-glutamate + ADP + phosphate + H(+). Its function is as follows. Allows the formation of correctly charged Gln-tRNA(Gln) through the transamidation of misacylated Glu-tRNA(Gln) in organisms which lack glutaminyl-tRNA synthetase. The reaction takes place in the presence of glutamine and ATP through an activated gamma-phospho-Glu-tRNA(Gln). The protein is Glutamyl-tRNA(Gln) amidotransferase subunit A of Clostridium botulinum (strain Okra / Type B1).